Consider the following 193-residue polypeptide: Putative anthranilate synthase component II (193 aa).

One can recognise a Glutamine amidotransferase type-1 domain in the interval 2–193 (KLLIINNHDS…WLAIPPTTNP (192 aa)). Catalysis depends on residues C78, H168, and E170.

As to quaternary structure, tetramer of two components I and two components II.

The enzyme catalyses chorismate + L-glutamine = anthranilate + pyruvate + L-glutamate + H(+). Its pathway is amino-acid biosynthesis; L-tryptophan biosynthesis; L-tryptophan from chorismate: step 1/5. The sequence is that of Putative anthranilate synthase component II from Haemophilus influenzae (strain ATCC 51907 / DSM 11121 / KW20 / Rd).